The sequence spans 362 residues: MAVVAPRTLLLLLSGTLALTRTWAGSHSMRYFYTTMSRPGRGEPRFISVGYVDDTQFVRFDSDDASPREEPRAPWMEREGPEYWDRNTQIYKAQAQTDRVDLETLRGYYNQSEGGSHTIQRMYGCEVGPDGRFLRGYLQDAYDGKDYITLNEDLRSWTAADMAAQITQRKWEAAREAERLRAYMEGTCVEWLRRHLENGKETLQRTDPPKTHMTHHPVSDHEATLRCWALGFYPAEITLTWQRDGEDQTQDTELVETRPGGDGTFQKWAAVVVPSGKEQRYTCHVQHEGLPKPLTLRWEPSSQPTIPIVGIIAGLVLLGAVITGAVVAAMMWRKKSSGRKGGSYSQAASSDSAQGSDVSLTA.

The signal sequence occupies residues M1–A24. Positions G25 to G114 are alpha-1. Topologically, residues G25–I308 are extracellular. An N-linked (GlcNAc...) asparagine glycan is attached at N110. The tract at residues G115–T206 is alpha-2. Disulfide bonds link C125–C188 and C227–C283. An alpha-3 region spans residues D207–W298. Residues P209–T295 enclose the Ig-like C1-type domain. The interval E299–I308 is connecting peptide. The chain crosses the membrane as a helical span at residues V309–W332. Residues R333 to A362 are Cytoplasmic-facing. The segment at S337 to A362 is disordered. Over residues G342–A362 the composition is skewed to low complexity.

This sequence belongs to the MHC class I family. In terms of assembly, heterodimer of an alpha chain and a beta chain (beta-2-microglobulin).

It localises to the membrane. Its function is as follows. Involved in the presentation of foreign antigens to the immune system. This is Class I histocompatibility antigen, Gogo-OKO alpha chain from Gorilla gorilla gorilla (Western lowland gorilla).